Here is a 125-residue protein sequence, read N- to C-terminus: MYAYIFAFFELITFLVPVLLAVAFLTLVERKVLGYMQFRKGPNVVGLTDFCNLFADGLKLFIKETVKPSSASPYLFFASPVLFLTLALLLWNFMPVTSPALDLQLSLLLVLGLSSLSVYAILGSG.

The next 3 membrane-spanning stretches (helical) occupy residues 5-25, 74-94, and 105-125; these read IFAFFELITFLVPVLLAVAFL, YLFFASPVLFLTLALLLWNFM, and LSLLLVLGLSSLSVYAILGSG.

This sequence belongs to the complex I subunit 1 family.

Its subcellular location is the mitochondrion inner membrane. It catalyses the reaction a ubiquinone + NADH + 5 H(+)(in) = a ubiquinol + NAD(+) + 4 H(+)(out). In terms of biological role, core subunit of the mitochondrial membrane respiratory chain NADH dehydrogenase (Complex I) that is believed to belong to the minimal assembly required for catalysis. Complex I functions in the transfer of electrons from NADH to the respiratory chain. The immediate electron acceptor for the enzyme is believed to be ubiquinone. The chain is NADH-ubiquinone oxidoreductase chain 1 (ND1) from Arbacia lixula (Black urchin).